Consider the following 388-residue polypeptide: Protein phosphatase 2C 57 (388 aa).

Residues 59-348 (RWGYTSVQGF…DNISIIIADL (290 aa)) enclose the PPM-type phosphatase domain. Residues aspartate 93, glycine 94, aspartate 296, and aspartate 339 each contribute to the Mn(2+) site. Residues 363-383 (VVVELVQAATTIGLVTVGIWM) form a helical membrane-spanning segment.

It belongs to the PP2C family. The cofactor is Mg(2+). It depends on Mn(2+) as a cofactor.

It localises to the membrane. The protein resides in the plastid. The protein localises to the chloroplast stroma. It carries out the reaction O-phospho-L-seryl-[protein] + H2O = L-seryl-[protein] + phosphate. It catalyses the reaction O-phospho-L-threonyl-[protein] + H2O = L-threonyl-[protein] + phosphate. Functionally, protein phosphatase specifically required for efficient dephosphorylation of the light-harvesting complex II outer antennae (LCHII) and transition from state 2 to state 1. State transition plays a central role in response to environmental changes and allows to adjust to changing light conditions via the redistribution of light excitation energy between photosystem II (PSII) and photosystem I (PSI) in a short time by relocating LHCII proteins. Mainly responsible for the dephosphorylation of Lhcb1 and Lhcb2 but not of the photosystem II core proteins. In Arabidopsis thaliana (Mouse-ear cress), this protein is Protein phosphatase 2C 57.